A 299-amino-acid polypeptide reads, in one-letter code: Phosphatidylserine decarboxylase proenzyme (299 aa).

Active-site charge relay system; for autoendoproteolytic cleavage activity residues include Asp-115, His-171, and Ser-258. The active-site Schiff-base intermediate with substrate; via pyruvic acid; for decarboxylase activity is the Ser-258. Residue Ser-258 is modified to Pyruvic acid (Ser); by autocatalysis.

It belongs to the phosphatidylserine decarboxylase family. PSD-B subfamily. Prokaryotic type II sub-subfamily. Heterodimer of a large membrane-associated beta subunit and a small pyruvoyl-containing alpha subunit. It depends on pyruvate as a cofactor. In terms of processing, is synthesized initially as an inactive proenzyme. Formation of the active enzyme involves a self-maturation process in which the active site pyruvoyl group is generated from an internal serine residue via an autocatalytic post-translational modification. Two non-identical subunits are generated from the proenzyme in this reaction, and the pyruvate is formed at the N-terminus of the alpha chain, which is derived from the carboxyl end of the proenzyme. The autoendoproteolytic cleavage occurs by a canonical serine protease mechanism, in which the side chain hydroxyl group of the serine supplies its oxygen atom to form the C-terminus of the beta chain, while the remainder of the serine residue undergoes an oxidative deamination to produce ammonia and the pyruvoyl prosthetic group on the alpha chain. During this reaction, the Ser that is part of the protease active site of the proenzyme becomes the pyruvoyl prosthetic group, which constitutes an essential element of the active site of the mature decarboxylase.

Its subcellular location is the cell membrane. The enzyme catalyses a 1,2-diacyl-sn-glycero-3-phospho-L-serine + H(+) = a 1,2-diacyl-sn-glycero-3-phosphoethanolamine + CO2. The protein operates within phospholipid metabolism; phosphatidylethanolamine biosynthesis; phosphatidylethanolamine from CDP-diacylglycerol: step 2/2. Its function is as follows. Catalyzes the formation of phosphatidylethanolamine (PtdEtn) from phosphatidylserine (PtdSer). This Chlamydia felis (strain Fe/C-56) (Chlamydophila felis) protein is Phosphatidylserine decarboxylase proenzyme.